Here is a 1185-residue protein sequence, read N- to C-terminus: Chromosome partition protein Smc (1185 aa).

32-39 (PNGSGKSN) lines the ATP pocket. Residues 228-503 (SRLVKKLTIA…LQAVQERYTN (276 aa)) adopt a coiled-coil conformation. The tract at residues 300–323 (TQGQQGVDAERRQNQQSEQERLTA) is disordered. The segment covering 307-320 (DAERRQNQQSEQER) has biased composition (basic and acidic residues). In terms of domain architecture, SMC hinge spans 519–637 (SGVAGAVSEL…VDTLDHAMAI (119 aa)). Coiled coils occupy residues 675 to 928 (QQQQ…RRLE) and 989 to 1025 (AIDE…ADLD).

Belongs to the SMC family. In terms of assembly, homodimer.

The protein resides in the cytoplasm. In terms of biological role, required for chromosome condensation and partitioning. The sequence is that of Chromosome partition protein Smc from Lactiplantibacillus plantarum (strain ATCC BAA-793 / NCIMB 8826 / WCFS1) (Lactobacillus plantarum).